Here is a 358-residue protein sequence, read N- to C-terminus: tRNA (guanine(26)-N(2))-dimethyltransferase (358 aa).

Residues 5 to 354 (VIRREGKAVF…ATYGEVERVL (350 aa)) enclose the Trm1 methyltransferase domain. Residues Arg39, Arg69, Asp87, Asp113, and Ala114 each coordinate S-adenosyl-L-methionine.

It belongs to the class I-like SAM-binding methyltransferase superfamily. Trm1 family.

It carries out the reaction guanosine(26) in tRNA + 2 S-adenosyl-L-methionine = N(2)-dimethylguanosine(26) in tRNA + 2 S-adenosyl-L-homocysteine + 2 H(+). Its function is as follows. Dimethylates a single guanine residue at position 26 of a number of tRNAs using S-adenosyl-L-methionine as donor of the methyl groups. The protein is tRNA (guanine(26)-N(2))-dimethyltransferase of Pyrobaculum calidifontis (strain DSM 21063 / JCM 11548 / VA1).